Reading from the N-terminus, the 99-residue chain is Integration host factor subunit alpha (99 aa).

Positions 49–70 (FGNFDLRDKNQRPGRNPKTGED) are disordered.

This sequence belongs to the bacterial histone-like protein family. As to quaternary structure, heterodimer of an alpha and a beta chain.

Its function is as follows. This protein is one of the two subunits of integration host factor, a specific DNA-binding protein that functions in genetic recombination as well as in transcriptional and translational control. The protein is Integration host factor subunit alpha of Cronobacter sakazakii (strain ATCC BAA-894) (Enterobacter sakazakii).